The sequence spans 155 residues: MPGFIGREQHSVDEKGRLLIPARFRRRFLLQENDPATGAPSRSPVLYVFKADDGSLELYEPSVWSEKEQQLLKLSDFNPDERLLTTMIYARLDQTELDRSGRIALSREMLDHAGIVKDAVIIGANAKMTVWEPLRLERLLSDNASRFAPLANRYI.

SpoVT-AbrB domains lie at 7 to 63 (REQH…EPSV) and 92 to 135 (LDQT…EPLR).

Belongs to the MraZ family. Forms oligomers.

It localises to the cytoplasm. Its subcellular location is the nucleoid. This Chlorobaculum tepidum (strain ATCC 49652 / DSM 12025 / NBRC 103806 / TLS) (Chlorobium tepidum) protein is Transcriptional regulator MraZ.